Consider the following 117-residue polypeptide: Non-specific lipid-transfer protein 2 (117 aa).

Residues 1–25 (MAGLMKLACLVLACMIVAGPITSNA) form the signal peptide. 4 disulfides stabilise this stretch: Cys-29–Cys-76, Cys-39–Cys-53, Cys-54–Cys-99, and Cys-74–Cys-113.

Belongs to the plant LTP family.

Functionally, plant non-specific lipid-transfer proteins transfer phospholipids as well as galactolipids across membranes. May play a role in wax or cutin deposition in the cell walls of expanding epidermal cells and certain secretory tissues. The protein is Non-specific lipid-transfer protein 2 (LTP2) of Brassica napus (Rape).